The sequence spans 486 residues: Cardiolipin synthase A (486 aa).

The next 2 helical transmembrane spans lie at 3–23 and 38–58; these read TVYTLVSWLAILGYWLLIAGV and MAWLLIIYILPLVGIIAYLAV. 2 PLD phosphodiesterase domains span residues 219 to 246 and 399 to 426; these read MDLRQHRKMIMIDNYIAYTGSMNMVDPR and EGGLLHTKSVLVDGELSLVGTVNLDMRS. Catalysis depends on residues H224, K226, D231, H404, K406, and D411.

This sequence belongs to the phospholipase D family. Cardiolipin synthase subfamily. ClsA sub-subfamily.

It is found in the cell inner membrane. The catalysed reaction is 2 a 1,2-diacyl-sn-glycero-3-phospho-(1'-sn-glycerol) = a cardiolipin + glycerol. Catalyzes the reversible phosphatidyl group transfer from one phosphatidylglycerol molecule to another to form cardiolipin (CL) (diphosphatidylglycerol) and glycerol. The protein is Cardiolipin synthase A of Shigella flexneri.